A 251-amino-acid chain; its full sequence is Ubiquinone/menaquinone biosynthesis C-methyltransferase UbiE (251 aa).

Residues T74, D95, 123–124, and S140 each bind S-adenosyl-L-methionine; that span reads NA.

Belongs to the class I-like SAM-binding methyltransferase superfamily. MenG/UbiE family.

The enzyme catalyses a 2-demethylmenaquinol + S-adenosyl-L-methionine = a menaquinol + S-adenosyl-L-homocysteine + H(+). It catalyses the reaction a 2-methoxy-6-(all-trans-polyprenyl)benzene-1,4-diol + S-adenosyl-L-methionine = a 5-methoxy-2-methyl-3-(all-trans-polyprenyl)benzene-1,4-diol + S-adenosyl-L-homocysteine + H(+). The protein operates within quinol/quinone metabolism; menaquinone biosynthesis; menaquinol from 1,4-dihydroxy-2-naphthoate: step 2/2. Its pathway is cofactor biosynthesis; ubiquinone biosynthesis. In terms of biological role, methyltransferase required for the conversion of demethylmenaquinol (DMKH2) to menaquinol (MKH2) and the conversion of 2-polyprenyl-6-methoxy-1,4-benzoquinol (DDMQH2) to 2-polyprenyl-3-methyl-6-methoxy-1,4-benzoquinol (DMQH2). The chain is Ubiquinone/menaquinone biosynthesis C-methyltransferase UbiE from Yersinia pestis bv. Antiqua (strain Angola).